We begin with the raw amino-acid sequence, 437 residues long: MEGFKIKSVKARQVFDSRANPTVEVDITLKDGTVGRGIVPSGASTGLFEAVELRDGEETFDGKGVSKAIHHVNEQLAPLLLDMDVRDQKAIDSRLIEIDGTPNKSRLGANAILGCSMAACWAGANYYKVPLYRYLGGSAANKLPVPMVQIIGGGAHADNVIDIQDFLVIPTSAPTFSEGYEMVVNVYNAAKMIFKGAGKPVSIADEGGLWPTGFQSNEEGLKLLCESIELAGYTPGQDLGIALDIASSEFYDPERGTYRLELEKKTLTKEEMVGMLSDWVDNYPIISIEDGMSELDWEGNLLLTQKLGKKIQLIGDDLFTTNIERIRKGVEMKVDNAVLIKMNQIGTITETIETIEFTQNHGYLPVVSARSGETEDCTIVHLAIATNAGQLKVGSAARSERTAKWNEVLRIEEALGSSARYPSKGVFAAAGIQFNQY.

Gln-164 contributes to the (2R)-2-phosphoglycerate binding site. Residue Glu-206 is the Proton donor of the active site. Residues Asp-244, Glu-289, and Asp-316 each coordinate Mg(2+). Residues Lys-341, Arg-370, Ser-371, and Lys-392 each contribute to the (2R)-2-phosphoglycerate site. The Proton acceptor role is filled by Lys-341.

It belongs to the enolase family. The cofactor is Mg(2+).

It localises to the cytoplasm. It is found in the secreted. The protein localises to the cell surface. The enzyme catalyses (2R)-2-phosphoglycerate = phosphoenolpyruvate + H2O. It functions in the pathway carbohydrate degradation; glycolysis; pyruvate from D-glyceraldehyde 3-phosphate: step 4/5. In terms of biological role, catalyzes the reversible conversion of 2-phosphoglycerate (2-PG) into phosphoenolpyruvate (PEP). It is essential for the degradation of carbohydrates via glycolysis. The polypeptide is Enolase 1 (Desulfitobacterium hafniense (strain Y51)).